Consider the following 251-residue polypeptide: MRIGFIGFGEVSSTLSQFFKDKVEVQTCVKGRSEKTKKIAKKLGVKIYKDYKDLVKNSDIVISAVTPFSALDVAKKYGKYVKGIYVDVNNVSPLTKHKILKYIDEEKFVDCAIIGRIKRKFKMICSGKNANKLKILEKFGVPIEVIGSKVGEASTLKMLRSLYTKSLAAILLEVFSVANKLGLIDELLEILEETEGKKFVDLCKSRVVGSFIHSRRRYEEICEIEKFILSHNLKPIMIKCTKNMFKHIEEC.

This is an uncharacterized protein from Methanothermus fervidus.